The chain runs to 90 residues: DNA-directed RNA polymerase subunit Rpo11 (90 aa).

Belongs to the archaeal Rpo11/eukaryotic RPB11/RPC19 RNA polymerase subunit family. In terms of assembly, part of the 13-subunit RNA polymerase complex.

The protein localises to the cytoplasm. The enzyme catalyses RNA(n) + a ribonucleoside 5'-triphosphate = RNA(n+1) + diphosphate. DNA-dependent RNA polymerase (RNAP) catalyzes the transcription of DNA into RNA using the four ribonucleoside triphosphates as substrates. The sequence is that of DNA-directed RNA polymerase subunit Rpo11 from Sulfolobus acidocaldarius (strain ATCC 33909 / DSM 639 / JCM 8929 / NBRC 15157 / NCIMB 11770).